We begin with the raw amino-acid sequence, 321 residues long: CRISPR-associated aCascade subunit Cas7/Csa2 2 (321 aa).

Belongs to the CRISPR-associated protein Cas7/Cst2/DevR family. Subtype I-a/Apern subfamily. As to quaternary structure, part of the aCascade ribonucleoprotein complex, minimally composed of Csa2 and Cas5a, which binds crRNA. Other possible components of aCascade in strain P1 are Cas6b (SSO1437) and Csa5 (SSO1443), while SSO1399, Cas5b (SSO1400) and SSO1401 have sometimes been seen weakly associated. Csa2 is probably the major RNA-binding subunit. The Csa2-Cas5a-crRNA complex also binds target DNA homologous to crRNA, probably forming an R-loop. Purified aCascade forms a filament about 6 nm in width.

In terms of biological role, CRISPR (clustered regularly interspaced short palindromic repeat) is an adaptive immune system that provides protection against mobile genetic elements (viruses, transposable elements and conjugative plasmids). CRISPR clusters contain spacers, sequences complementary to antecedent mobile elements, and target invading nucleic acids. CRISPR clusters are transcribed and processed into CRISPR RNA (crRNA). The protein is CRISPR-associated aCascade subunit Cas7/Csa2 2 (csa2b) of Saccharolobus solfataricus (strain ATCC 35092 / DSM 1617 / JCM 11322 / P2) (Sulfolobus solfataricus).